The chain runs to 313 residues: Porphobilinogen deaminase (313 aa).

The residue at position 241 (Cys-241) is an S-(dipyrrolylmethanemethyl)cysteine.

This sequence belongs to the HMBS family. Monomer. Dipyrromethane is required as a cofactor.

It catalyses the reaction 4 porphobilinogen + H2O = hydroxymethylbilane + 4 NH4(+). Its pathway is porphyrin-containing compound metabolism; protoporphyrin-IX biosynthesis; coproporphyrinogen-III from 5-aminolevulinate: step 2/4. It participates in porphyrin-containing compound metabolism; chlorophyll biosynthesis. Tetrapolymerization of the monopyrrole PBG into the hydroxymethylbilane pre-uroporphyrinogen in several discrete steps. The chain is Porphobilinogen deaminase from Chlorobium chlorochromatii (strain CaD3).